We begin with the raw amino-acid sequence, 379 residues long: Chaperone protein DnaJ (379 aa).

The J domain maps to 5–71; that stretch reads DYYEILGVSR…EKRAMYDRFG (67 aa). The segment at 149–231 adopts a CR-type zinc-finger fold; sequence GTTIPIEYDR…CGGSGRIRKR (83 aa). Zn(2+) is bound by residues Cys-162, Cys-165, Cys-179, Cys-182, Cys-205, Cys-208, Cys-219, and Cys-222. CXXCXGXG motif repeat units follow at residues 162 to 169, 179 to 186, 205 to 212, and 219 to 226; these read CSHCNGEG, CPKCHGTG, CNQCGGTG, and CHVCGGSG.

This sequence belongs to the DnaJ family. In terms of assembly, homodimer. Requires Zn(2+) as cofactor.

The protein resides in the cytoplasm. In terms of biological role, participates actively in the response to hyperosmotic and heat shock by preventing the aggregation of stress-denatured proteins and by disaggregating proteins, also in an autonomous, DnaK-independent fashion. Unfolded proteins bind initially to DnaJ; upon interaction with the DnaJ-bound protein, DnaK hydrolyzes its bound ATP, resulting in the formation of a stable complex. GrpE releases ADP from DnaK; ATP binding to DnaK triggers the release of the substrate protein, thus completing the reaction cycle. Several rounds of ATP-dependent interactions between DnaJ, DnaK and GrpE are required for fully efficient folding. Also involved, together with DnaK and GrpE, in the DNA replication of plasmids through activation of initiation proteins. The chain is Chaperone protein DnaJ from Thermosipho africanus (strain TCF52B).